We begin with the raw amino-acid sequence, 200 residues long: Recombination protein RecR (200 aa).

The C4-type zinc-finger motif lies at 59-74 (CEKCNTFTEAQVCEVC). The region spanning 82–177 (ALLCVVETPA…AVTRLARGVP (96 aa)) is the Toprim domain.

This sequence belongs to the RecR family.

In terms of biological role, may play a role in DNA repair. It seems to be involved in an RecBC-independent recombinational process of DNA repair. It may act with RecF and RecO. This chain is Recombination protein RecR, found in Burkholderia pseudomallei (strain 1106a).